The chain runs to 188 residues: 2-amino-4-hydroxy-6-hydroxymethyldihydropteridine pyrophosphokinase (188 aa).

It belongs to the HPPK family.

It catalyses the reaction 6-hydroxymethyl-7,8-dihydropterin + ATP = (7,8-dihydropterin-6-yl)methyl diphosphate + AMP + H(+). It functions in the pathway cofactor biosynthesis; tetrahydrofolate biosynthesis; 2-amino-4-hydroxy-6-hydroxymethyl-7,8-dihydropteridine diphosphate from 7,8-dihydroneopterin triphosphate: step 4/4. In terms of biological role, catalyzes the transfer of pyrophosphate from adenosine triphosphate (ATP) to 6-hydroxymethyl-7,8-dihydropterin, an enzymatic step in folate biosynthesis pathway. The protein is 2-amino-4-hydroxy-6-hydroxymethyldihydropteridine pyrophosphokinase (folK) of Mycobacterium tuberculosis (strain ATCC 25618 / H37Rv).